Here is a 636-residue protein sequence, read N- to C-terminus: 3-phosphoinositide-dependent protein kinase 1 (636 aa).

2 stretches are compositionally biased toward low complexity: residues 1–20 (MEDLTPTNTSLDTTTTNNDT) and 27–37 (APTTLNLTPTA). Residues 1-45 (MEDLTPTNTSLDTTTTNNDTTSDREAAPTTLNLTPTASESENSLS) form a disordered region. In terms of domain architecture, Protein kinase spans 69-364 (FMFLQSMGEG…SQELMAHKFF (296 aa)). ATP-binding positions include 79–81 (AYS) and Lys98. The tract at residues 100 to 149 (LQKSYLNRHQKMDAIIREKNILTYLSQECGGHPFVTQLYTHFHDQARIYF) is PIF-pocket. ATP-binding positions include 152-154 (GLV) and Asp158. Asp197 acts as the Proton acceptor in catalysis. ATP contacts are provided by Asp201 and Asp215. Disordered stretches follow at residues 233–264 (TDANQASSRSSDSGSPPPTRFYSDEEVPEENT) and 593–636 (KKSR…KKSP). Residues 550–631 (DLEKKADEWC…QVSKKLSMQM (82 aa)) are a coiled coil. The segment covering 597–624 (KEMMREQKALRRKQEKEEKKALKAEQVS) has biased composition (basic and acidic residues).

It belongs to the protein kinase superfamily. AGC Ser/Thr protein kinase family. PDPK1 subfamily. Interacts directly with sgk-1, akt-1 and akt-2.

Its subcellular location is the cytoplasm. The catalysed reaction is L-seryl-[protein] + ATP = O-phospho-L-seryl-[protein] + ADP + H(+). It carries out the reaction L-threonyl-[protein] + ATP = O-phospho-L-threonyl-[protein] + ADP + H(+). Functionally, involved in the daf-2/insulin receptor-like transduction pathway, which controls longevity and prevents developmental arrest at the dauer stage. Phosphorylates and activates sgk-1, akt-1 and akt-2. The chain is 3-phosphoinositide-dependent protein kinase 1 from Caenorhabditis elegans.